The sequence spans 268 residues: Hydroxyethylthiazole kinase (268 aa).

Met45 is a substrate binding site. Arg121 and Thr167 together coordinate ATP. Gly194 contacts substrate.

The protein belongs to the Thz kinase family. Requires Mg(2+) as cofactor.

It carries out the reaction 5-(2-hydroxyethyl)-4-methylthiazole + ATP = 4-methyl-5-(2-phosphooxyethyl)-thiazole + ADP + H(+). It participates in cofactor biosynthesis; thiamine diphosphate biosynthesis; 4-methyl-5-(2-phosphoethyl)-thiazole from 5-(2-hydroxyethyl)-4-methylthiazole: step 1/1. Functionally, catalyzes the phosphorylation of the hydroxyl group of 4-methyl-5-beta-hydroxyethylthiazole (THZ). In Bacillus cereus (strain ATCC 10987 / NRS 248), this protein is Hydroxyethylthiazole kinase.